Reading from the N-terminus, the 38-residue chain is Large ribosomal subunit protein bL36A (38 aa).

The protein belongs to the bacterial ribosomal protein bL36 family.

The polypeptide is Large ribosomal subunit protein bL36A (Prochlorococcus marinus (strain MIT 9515)).